The following is a 246-amino-acid chain: tRNA (guanine-N(1)-)-methyltransferase (246 aa).

Residues Gly-113 and 133 to 138 (IGDFVM) each bind S-adenosyl-L-methionine.

It belongs to the RNA methyltransferase TrmD family. In terms of assembly, homodimer.

The protein resides in the cytoplasm. It catalyses the reaction guanosine(37) in tRNA + S-adenosyl-L-methionine = N(1)-methylguanosine(37) in tRNA + S-adenosyl-L-homocysteine + H(+). Functionally, specifically methylates guanosine-37 in various tRNAs. This chain is tRNA (guanine-N(1)-)-methyltransferase, found in Vibrio atlanticus (strain LGP32) (Vibrio splendidus (strain Mel32)).